A 284-amino-acid polypeptide reads, in one-letter code: RNase adapter protein RapZ (284 aa).

8 to 15 lines the ATP pocket; sequence GRSGSGKS. 56–59 is a binding site for GTP; sequence DVRN. An RNA-binding region spans residues 266-284; it reads RSRGKNVQSRHRTLEKRKT.

The protein belongs to the RapZ-like family. RapZ subfamily. Homotrimer.

Modulates the synthesis of GlmS, by affecting the processing and stability of the regulatory small RNA GlmZ. When glucosamine-6-phosphate (GlcN6P) concentrations are high in the cell, RapZ binds GlmZ and targets it to cleavage by RNase E. Consequently, GlmZ is inactivated and unable to activate GlmS synthesis. Under low GlcN6P concentrations, RapZ is sequestered and inactivated by an other regulatory small RNA, GlmY, preventing GlmZ degradation and leading to synthesis of GlmS. This is RNase adapter protein RapZ from Salmonella typhimurium (strain LT2 / SGSC1412 / ATCC 700720).